A 548-amino-acid polypeptide reads, in one-letter code: Glucose-6-phosphate isomerase 1 (548 aa).

Catalysis depends on glutamate 353, which acts as the Proton donor. Residues histidine 384 and lysine 512 contribute to the active site.

This sequence belongs to the GPI family.

The protein localises to the cytoplasm. It carries out the reaction alpha-D-glucose 6-phosphate = beta-D-fructose 6-phosphate. The protein operates within carbohydrate biosynthesis; gluconeogenesis. Its pathway is carbohydrate degradation; glycolysis; D-glyceraldehyde 3-phosphate and glycerone phosphate from D-glucose: step 2/4. In terms of biological role, catalyzes the reversible isomerization of glucose-6-phosphate to fructose-6-phosphate. In Neisseria gonorrhoeae (strain ATCC 700825 / FA 1090), this protein is Glucose-6-phosphate isomerase 1.